Consider the following 569-residue polypeptide: Proline--tRNA ligase (569 aa).

The protein belongs to the class-II aminoacyl-tRNA synthetase family. ProS type 1 subfamily. As to quaternary structure, homodimer.

The protein localises to the cytoplasm. It catalyses the reaction tRNA(Pro) + L-proline + ATP = L-prolyl-tRNA(Pro) + AMP + diphosphate. Its function is as follows. Catalyzes the attachment of proline to tRNA(Pro) in a two-step reaction: proline is first activated by ATP to form Pro-AMP and then transferred to the acceptor end of tRNA(Pro). As ProRS can inadvertently accommodate and process non-cognate amino acids such as alanine and cysteine, to avoid such errors it has two additional distinct editing activities against alanine. One activity is designated as 'pretransfer' editing and involves the tRNA(Pro)-independent hydrolysis of activated Ala-AMP. The other activity is designated 'posttransfer' editing and involves deacylation of mischarged Ala-tRNA(Pro). The misacylated Cys-tRNA(Pro) is not edited by ProRS. The protein is Proline--tRNA ligase of Shewanella woodyi (strain ATCC 51908 / MS32).